Here is a 158-residue protein sequence, read N- to C-terminus: Large ribosomal subunit protein uL30 (158 aa).

It belongs to the universal ribosomal protein uL30 family. In terms of assembly, part of the 50S ribosomal subunit.

The chain is Large ribosomal subunit protein uL30 from Saccharolobus solfataricus (strain ATCC 35092 / DSM 1617 / JCM 11322 / P2) (Sulfolobus solfataricus).